Consider the following 93-residue polypeptide: Integration host factor subunit beta (93 aa).

This sequence belongs to the bacterial histone-like protein family. As to quaternary structure, heterodimer of an alpha and a beta chain.

Its function is as follows. This protein is one of the two subunits of integration host factor, a specific DNA-binding protein that functions in genetic recombination as well as in transcriptional and translational control. The chain is Integration host factor subunit beta from Rhodospirillum centenum (strain ATCC 51521 / SW).